The chain runs to 92 residues: Large ribosomal subunit protein eL43 (92 aa).

Residues Cys39–Cys60 form a C4-type zinc finger.

It belongs to the eukaryotic ribosomal protein eL43 family.

The chain is Large ribosomal subunit protein eL43 (RpL37A) from Drosophila melanogaster (Fruit fly).